The primary structure comprises 325 residues: Large ribosomal subunit protein uL1m (325 aa).

Residues 1–50 constitute a mitochondrion transit peptide; that stretch reads MAAAVRCMGRALIHHQRHSLSKMVYQTSLCSCSVNIRVPNRHFAAATKSA.

Belongs to the universal ribosomal protein uL1 family. As to quaternary structure, component of the mitochondrial large ribosomal subunit (mt-LSU). Mature mammalian 55S mitochondrial ribosomes consist of a small (28S) and a large (39S) subunit. The 28S small subunit contains a 12S ribosomal RNA (12S mt-rRNA) and 30 different proteins. The 39S large subunit contains a 16S rRNA (16S mt-rRNA), a copy of mitochondrial valine transfer RNA (mt-tRNA(Val)), which plays an integral structural role, and 52 different proteins.

Its subcellular location is the mitochondrion. The sequence is that of Large ribosomal subunit protein uL1m (MRPL1) from Homo sapiens (Human).